Reading from the N-terminus, the 379-residue chain is Histidinol-phosphate aminotransferase (379 aa).

Residue Lys-231 is modified to N6-(pyridoxal phosphate)lysine.

Belongs to the class-II pyridoxal-phosphate-dependent aminotransferase family. Histidinol-phosphate aminotransferase subfamily. In terms of assembly, homodimer. Pyridoxal 5'-phosphate is required as a cofactor.

It catalyses the reaction L-histidinol phosphate + 2-oxoglutarate = 3-(imidazol-4-yl)-2-oxopropyl phosphate + L-glutamate. The protein operates within amino-acid biosynthesis; L-histidine biosynthesis; L-histidine from 5-phospho-alpha-D-ribose 1-diphosphate: step 7/9. The chain is Histidinol-phosphate aminotransferase from Mycolicibacterium smegmatis (strain ATCC 700084 / mc(2)155) (Mycobacterium smegmatis).